Consider the following 445-residue polypeptide: Meiosis-specific serine/threonine-protein kinase mek1 (445 aa).

Residues 62–116 (VSVGRSNTCNYQLLQFTASYKHFRVYSVLIDDDMDPLVYCEDQSSNGTFLNHRLI) enclose the FHA domain. Residues 160–421 (NITQRLLGIG…VKQCLSHPWF (262 aa)) enclose the Protein kinase domain. ATP contacts are provided by residues 166–174 (LGIGGFSRI) and K189. Catalysis depends on D281, which acts as the Proton acceptor.

Belongs to the protein kinase superfamily. CAMK Ser/Thr protein kinase family. CHEK2 subfamily.

It catalyses the reaction L-seryl-[protein] + ATP = O-phospho-L-seryl-[protein] + ADP + H(+). It carries out the reaction L-threonyl-[protein] + ATP = O-phospho-L-threonyl-[protein] + ADP + H(+). Functionally, probable protein kinase required for meiotic recombination. The sequence is that of Meiosis-specific serine/threonine-protein kinase mek1 (mek1) from Schizosaccharomyces pombe (strain 972 / ATCC 24843) (Fission yeast).